Reading from the N-terminus, the 130-residue chain is Small ribosomal subunit protein uS9 (130 aa).

The interval Arg-109–Arg-130 is disordered. Basic residues predominate over residues Lys-111–Arg-130.

Belongs to the universal ribosomal protein uS9 family.

The sequence is that of Small ribosomal subunit protein uS9 from Listeria innocua serovar 6a (strain ATCC BAA-680 / CLIP 11262).